Reading from the N-terminus, the 132-residue chain is Small ribosomal subunit protein uS8 (132 aa).

Belongs to the universal ribosomal protein uS8 family. As to quaternary structure, part of the 30S ribosomal subunit. Contacts proteins S5 and S12.

Its function is as follows. One of the primary rRNA binding proteins, it binds directly to 16S rRNA central domain where it helps coordinate assembly of the platform of the 30S subunit. The chain is Small ribosomal subunit protein uS8 from Mycolicibacterium gilvum (strain PYR-GCK) (Mycobacterium gilvum (strain PYR-GCK)).